The following is a 356-amino-acid chain: DNA polymerase IV (356 aa).

A UmuC domain is found at Ile-7–Gly-188. Residues Asp-11 and Asp-106 each coordinate Mg(2+). Glu-107 is an active-site residue.

Belongs to the DNA polymerase type-Y family. Monomer. It depends on Mg(2+) as a cofactor.

Its subcellular location is the cytoplasm. It catalyses the reaction DNA(n) + a 2'-deoxyribonucleoside 5'-triphosphate = DNA(n+1) + diphosphate. Its function is as follows. Poorly processive, error-prone DNA polymerase involved in untargeted mutagenesis. Copies undamaged DNA at stalled replication forks, which arise in vivo from mismatched or misaligned primer ends. These misaligned primers can be extended by PolIV. Exhibits no 3'-5' exonuclease (proofreading) activity. May be involved in translesional synthesis, in conjunction with the beta clamp from PolIII. The polypeptide is DNA polymerase IV (Listeria monocytogenes serotype 4b (strain CLIP80459)).